The following is a 1551-amino-acid chain: Pentafunctional AROM polypeptide 2 (1551 aa).

The tract at residues 1-379 is 3-dehydroquinate synthase; the sequence is MSIEKVSILG…YESKAHQIFK (379 aa). Residues 42–44, 80–83, 111–113, and Asp116 each bind NAD(+); these read DTN, ENHK, and GGV. Arg127 contributes to the 7-phospho-2-dehydro-3-deoxy-D-arabino-heptonate binding site. 136 to 137 provides a ligand contact to NAD(+); it reads TT. 7-phospho-2-dehydro-3-deoxy-D-arabino-heptonate contacts are provided by Asp143 and Lys149. Lys158 serves as a coordination point for NAD(+). A 7-phospho-2-dehydro-3-deoxy-D-arabino-heptonate-binding site is contributed by Asn159. Residues 176-179 and Asn187 each bind NAD(+); that span reads FLQT. Position 191 (Glu191) interacts with Zn(2+). Residues 191–194 and Lys243 contribute to the 7-phospho-2-dehydro-3-deoxy-D-arabino-heptonate site; that span reads EVVK. Glu253 functions as the Proton acceptor; for 3-dehydroquinate synthase activity in the catalytic mechanism. 7-phospho-2-dehydro-3-deoxy-D-arabino-heptonate-binding positions include 257–261 and His264; that span reads RNLLN. His264 lines the Zn(2+) pocket. His268 serves as the catalytic Proton acceptor; for 3-dehydroquinate synthase activity. Residues His280 and Lys351 each contribute to the 7-phospho-2-dehydro-3-deoxy-D-arabino-heptonate site. Residue His280 participates in Zn(2+) binding. Residues 392 to 835 form an EPSP synthase region; sequence VHPFANRHPE…WDVLHSKFNA (444 aa). Positions 854-1044 are shikimate kinase; it reads DRSIVIIGMR…LPATRSTFVT (191 aa). Residue 861–868 participates in ATP binding; that stretch reads GMRAAGKT. Residues 1045-1258 are 3-dehydroquinase; the sequence is LTYPDLRKVP…IGVGQLSLKE (214 aa). The active-site Proton acceptor; for 3-dehydroquinate dehydratase activity is the His1162. Residue Lys1191 is the Schiff-base intermediate with substrate; for 3-dehydroquinate dehydratase activity of the active site. The interval 1271 to 1551 is shikimate dehydrogenase; it reads EKEFWVVGFP…KVIHSAVLNE (281 aa).

The protein in the N-terminal section; belongs to the sugar phosphate cyclases superfamily. Dehydroquinate synthase family. It in the 2nd section; belongs to the EPSP synthase family. This sequence in the 3rd section; belongs to the shikimate kinase family. In the 4th section; belongs to the type-I 3-dehydroquinase family. The protein in the C-terminal section; belongs to the shikimate dehydrogenase family. Homodimer. The cofactor is Zn(2+).

The protein localises to the cytoplasm. The enzyme catalyses 7-phospho-2-dehydro-3-deoxy-D-arabino-heptonate = 3-dehydroquinate + phosphate. It carries out the reaction 3-dehydroquinate = 3-dehydroshikimate + H2O. It catalyses the reaction shikimate + NADP(+) = 3-dehydroshikimate + NADPH + H(+). The catalysed reaction is shikimate + ATP = 3-phosphoshikimate + ADP + H(+). The enzyme catalyses 3-phosphoshikimate + phosphoenolpyruvate = 5-O-(1-carboxyvinyl)-3-phosphoshikimate + phosphate. The protein operates within metabolic intermediate biosynthesis; chorismate biosynthesis; chorismate from D-erythrose 4-phosphate and phosphoenolpyruvate: step 2/7. It functions in the pathway metabolic intermediate biosynthesis; chorismate biosynthesis; chorismate from D-erythrose 4-phosphate and phosphoenolpyruvate: step 3/7. Its pathway is metabolic intermediate biosynthesis; chorismate biosynthesis; chorismate from D-erythrose 4-phosphate and phosphoenolpyruvate: step 4/7. It participates in metabolic intermediate biosynthesis; chorismate biosynthesis; chorismate from D-erythrose 4-phosphate and phosphoenolpyruvate: step 5/7. The protein operates within metabolic intermediate biosynthesis; chorismate biosynthesis; chorismate from D-erythrose 4-phosphate and phosphoenolpyruvate: step 6/7. The AROM polypeptide catalyzes 5 consecutive enzymatic reactions in prechorismate polyaromatic amino acid biosynthesis. The sequence is that of Pentafunctional AROM polypeptide 2 from Lodderomyces elongisporus (strain ATCC 11503 / CBS 2605 / JCM 1781 / NBRC 1676 / NRRL YB-4239) (Yeast).